Reading from the N-terminus, the 510-residue chain is ATP synthase subunit alpha (510 aa).

Position 169-176 (169-176) interacts with ATP; sequence GDRQTGKT.

Belongs to the ATPase alpha/beta chains family. F-type ATPases have 2 components, CF(1) - the catalytic core - and CF(0) - the membrane proton channel. CF(1) has five subunits: alpha(3), beta(3), gamma(1), delta(1), epsilon(1). CF(0) has three main subunits: a(1), b(2) and c(9-12). The alpha and beta chains form an alternating ring which encloses part of the gamma chain. CF(1) is attached to CF(0) by a central stalk formed by the gamma and epsilon chains, while a peripheral stalk is formed by the delta and b chains.

It is found in the cell inner membrane. The catalysed reaction is ATP + H2O + 4 H(+)(in) = ADP + phosphate + 5 H(+)(out). Its function is as follows. Produces ATP from ADP in the presence of a proton gradient across the membrane. The alpha chain is a regulatory subunit. The protein is ATP synthase subunit alpha of Rickettsia rickettsii (strain Iowa).